A 382-amino-acid polypeptide reads, in one-letter code: Gap junction alpha-1 protein (382 aa).

At 2–23 the chain is on the cytoplasmic side; it reads GGWSALAKLLGKVQAYSPAGGK. The residue at position 5 (Ser5) is a Phosphoserine. The chain crosses the membrane as a helical span at residues 24–44; it reads VWLSVLFIFRILLLGTAVESA. At 45–76 the chain is on the extracellular side; sequence WGDEQSAFRCNTQQPGCENVCYDKSFPISHVR. Disulfide bonds link Cys54–Cys192 and Cys187–Cys198. The chain crosses the membrane as a helical span at residues 77 to 97; that stretch reads FWVLQIIFVSVPTLLYLAHVF. The Cytoplasmic segment spans residues 98 to 155; it reads YVMRKEEKLNKKEEELKVAQTDGANVDMHLKQIEIKKFKYGIEEHGKVKMRGGLLRTY. A Glycyl lysine isopeptide (Lys-Gly) (interchain with G-Cter in SUMO) cross-link involves residue Lys144. A helical transmembrane segment spans residues 156–176; sequence IISILFKSVFEVAFLLIQWYI. Topologically, residues 177-207 are extracellular; the sequence is YGFSLSAVYTCKREPCPHQVDCFLSRPTEKT. The helical transmembrane segment at 208–228 threads the bilayer; sequence IFIIFMLVVSLVSLALNIIEL. The Cytoplasmic portion of the chain corresponds to 229–382; sequence FYVFFKGVKD…SRPRPDDLEI (154 aa). Residue Lys237 forms a Glycyl lysine isopeptide (Lys-Gly) (interchain with G-Cter in SUMO) linkage. Positions 244–382 are interaction with NOV; that stretch reads SDPYHATTGP…SRPRPDDLEI (139 aa). A Phosphotyrosine modification is found at Tyr247. Ser255, Ser257, and Ser262 each carry phosphoserine. An interaction with UBQLN4 region spans residues 264–382; sequence EYAYFNGCSS…SRPRPDDLEI (119 aa). Cys271 bears the S-nitrosocysteine mark. Thr275 carries the phosphothreonine modification. Ser306 and Ser314 each carry phosphoserine. The segment covering 317–332 has biased composition (polar residues); it reads QNRMGQAGSTISNSHA. The interval 317–382 is disordered; that stretch reads QNRMGQAGST…SRPRPDDLEI (66 aa). Ser325 is subject to Phosphoserine; by CK1. Thr326 is modified (phosphothreonine). Ser328 and Ser330 each carry phosphoserine; by CK1. Phosphoserine occurs at positions 344 and 365. Residues 362–374 show a composition bias toward low complexity; it reads RPSSRASSRASSR. Residue Ser368 is modified to Phosphoserine; by PKC/PRKCG and PKC/PRKCD. A phosphoserine mark is found at Ser369 and Ser373.

It belongs to the connexin family. Alpha-type (group II) subfamily. As to quaternary structure, a connexon is composed of a hexamer of connexins. Interacts with SGSM3. Interacts with RIC1/CIP150. Interacts with CNST and CSNK1D. Interacts (via C-terminus) with TJP1. Interacts (via C-terminus) with SRC (via SH3 domain). Interacts (not ubiquitinated) with UBQLN4 (via UBA domain). Interacts with NOV. Interacts with TMEM65. Interacts with ANK3/ANKG and PKP2. Post-translationally, phosphorylation at Ser-325, Ser-328 and Ser-330 by CK1 modulates gap junction assembly. Phosphorylated at Ser-368 by PRKCG; phosphorylation induces disassembly of gap junction plaques and inhibition of gap junction activity. Phosphorylation at Ser-368 by PRKCD triggers its internalization into small vesicles leading to proteasome-mediated degradation. Sumoylated with SUMO1, SUMO2 and SUMO3, which may regulate the level of functional Cx43 gap junctions at the plasma membrane. May be desumoylated by SENP1 or SENP2. In terms of processing, S-nitrosylation at Cys-271 is enriched at the muscle endothelial gap junction in arteries, it augments channel permeability and may regulate of smooth muscle cell to endothelial cell communication. Post-translationally, acetylated in the developing cortex; leading to delocalization from the cell membrane.

It localises to the cell membrane. The protein localises to the cell junction. The protein resides in the gap junction. Its subcellular location is the endoplasmic reticulum. Functionally, gap junction protein that acts as a regulator of bladder capacity. A gap junction consists of a cluster of closely packed pairs of transmembrane channels, the connexons, through which materials of low MW diffuse from one cell to a neighboring cell. May play a critical role in the physiology of hearing by participating in the recycling of potassium to the cochlear endolymph. Negative regulator of bladder functional capacity: acts by enhancing intercellular electrical and chemical transmission, thus sensitizing bladder muscles to cholinergic neural stimuli and causing them to contract. May play a role in cell growth inhibition through the regulation of NOV expression and localization. Plays an essential role in gap junction communication in the ventricles. In Canis lupus familiaris (Dog), this protein is Gap junction alpha-1 protein (GJA1).